The sequence spans 101 residues: Small ribosomal subunit protein uS14 (101 aa).

Residues Met1 to Asn10 are compositionally biased toward basic and acidic residues. Residues Met1–Lys23 form a disordered region. Basic residues predominate over residues Asn11 to Lys23.

The protein belongs to the universal ribosomal protein uS14 family. Part of the 30S ribosomal subunit. Contacts proteins S3 and S10.

Binds 16S rRNA, required for the assembly of 30S particles and may also be responsible for determining the conformation of the 16S rRNA at the A site. This is Small ribosomal subunit protein uS14 from Rhodopseudomonas palustris (strain HaA2).